Reading from the N-terminus, the 822-residue chain is Probable phosphoketolase (822 aa).

It belongs to the XFP family. It depends on thiamine diphosphate as a cofactor.

The chain is Probable phosphoketolase from Lactococcus lactis subsp. lactis (strain IL1403) (Streptococcus lactis).